A 1037-amino-acid polypeptide reads, in one-letter code: Ras guanine nucleotide exchange factor E (1037 aa).

Positions 5–35 (ECNNRIEYLQNKVLELESLNENLKGQLEYFQ) form a coiled coil. 8 disordered regions span residues 65 to 100 (NNNNNSNSNSNSNNNSSNSNNNSYSNFNSNNNTTNN), 114 to 150 (TNSNSTNSSPYIFGNNKDNSNNSNNSNNNNSNTELSN), 166 to 387 (TTTT…PLSN), 414 to 437 (TVNMIGGGGTPRSNNSSNGSLYHS), 451 to 472 (SSLSLSSTSPSPNNSQQNLTNP), 602 to 628 (INSNNQNNQNNNNNNNNNNNNNNNQLE), 907 to 935 (NTTTTTTTTTTTTTTNTTTSNNNNQQQLN), and 1004 to 1037 (EKETSSFDSGYGSVSDRPSKKEFSVTSLLNSFKS). Composition is skewed to low complexity over residues 114 to 145 (TNSNSTNSSPYIFGNNKDNSNNSNNSNNNNSN) and 166 to 200 (TTTTINTSNSNNSNNNNNNNNNNNNNNNNNNNNNN). Residues 229 to 239 (PTSSRNSPTNK) are compositionally biased toward polar residues. Residues 240 to 276 (SSPQFLSPLSKSPLSQSTQSTTVSSPSPSWTTTVPQS) are compositionally biased toward low complexity. Residues 282–300 (TIVQSKSPYSPDTNISNKL) are compositionally biased toward polar residues. Positions 318 to 360 (SPSKNSPRSLNSNNNNSSATTSITTPPTTSTPTPTTSTTTTTT) are enriched in low complexity. Over residues 361-370 (TERRPEDRRS) the composition is skewed to basic and acidic residues. Polar residues-rich tracts occupy residues 372-387 (TSPFPNVGTTTPPLSN) and 424-437 (PRSNNSSNGSLYHS). In terms of domain architecture, N-terminal Ras-GEF spans 496–694 (NGFIVKGGTI…NLKRLLTNDR (199 aa)). In terms of domain architecture, Ras-GEF spans 726-1003 (DPTEIARQLT…YKLSLICEPK (278 aa)). Low complexity predominate over residues 907–930 (NTTTTTTTTTTTTTTNTTTSNNNN). Residues 1027–1037 (SVTSLLNSFKS) show a composition bias toward polar residues.

Functionally, promotes the exchange of Ras-bound GDP by GTP. Seems to play a role in chemotaxis. The protein is Ras guanine nucleotide exchange factor E (gefE) of Dictyostelium discoideum (Social amoeba).